The primary structure comprises 995 residues: DNA polymerase (995 aa).

It belongs to the DNA polymerase type-B family.

The enzyme catalyses DNA(n) + a 2'-deoxyribonucleoside 5'-triphosphate = DNA(n+1) + diphosphate. The chain is DNA polymerase (RF1) from Kluyveromyces lactis (strain ATCC 8585 / CBS 2359 / DSM 70799 / NBRC 1267 / NRRL Y-1140 / WM37) (Yeast).